Here is a 7481-residue protein sequence, read N- to C-terminus: Polyketide synthase GfsA (7481 aa).

The segment at 24-1020 is loading module (LM); it reads ASDEPIAVIG…ETAEFVRARL (997 aa). Residues 26–451 form the Ketosynthase family 3 (KS3) 1 domain; sequence DEPIAVIGLS…GTNCHVVVSA (426 aa). The segment at 60 to 80 is disordered; the sequence is RVPADRETPPSTEEESADGEA. Gln197 (for decarboxylation activity of LM) is an active-site residue. The active-site For acyltransferase activity of LM is Ser662. In terms of domain architecture, Carrier 1 spans 945-1020; that stretch reads PDPVETVRQL…ETAEFVRARL (76 aa). At Ser980 the chain carries O-(pantetheine 4'-phosphoryl)serine. In terms of domain architecture, Ketosynthase family 3 (KS3) 2 spans 1038-1454; it reads DEPIAVVAMS…GTNAHVILEQ (417 aa). Module stretches follow at residues 1038–2517, 2538–4063, 4084–5636, and 5655–7400; these read DEPI…AGEL, EDPI…LQRI, DDPI…GSEV, and DEPV…GEQL. Catalysis depends on for beta-ketoacyl synthase 1 activity residues Cys1201, His1336, and His1376. A Carrier 2 domain is found at 2442–2517; sequence RVLLDLVRGR…ALAEHLAGEL (76 aa). Ser2477 carries the post-translational modification O-(pantetheine 4'-phosphoryl)serine. In terms of domain architecture, Ketosynthase family 3 (KS3) 3 spans 2538-2964; that stretch reads EDPIAIVAMS…GTNAHVIIEE (427 aa). Residues Cys2711, His2846, and His2886 each act as for beta-ketoacyl synthase 2 activity in the active site. Residues 3988–4063 form the Carrier 3 domain; that stretch reads QALQDLVLTE…ATTEYLLQRI (76 aa). An O-(pantetheine 4'-phosphoryl)serine modification is found at Ser4023. A Ketosynthase family 3 (KS3) 4 domain is found at 4084–4514; sequence DDPIAIVAMG…GTNAHVILEQ (431 aa). Residues Cys4261, His4396, and His4436 each act as for beta-ketoacyl synthase 3 activity in the active site. In terms of domain architecture, Carrier 4 spans 5561 to 5636; the sequence is TALLDLIRGQ…ALAEYVGSEV (76 aa). Ser5596 carries the post-translational modification O-(pantetheine 4'-phosphoryl)serine. Residues 5655 to 6081 enclose the Ketosynthase family 3 (KS3) 5 domain; that stretch reads DEPVAIIGMS…GTNAHVILEQ (427 aa). Active-site for beta-ketoacyl synthase 4 activity residues include Cys5828, His5963, and His6003. Positions 6561–6685 are N-terminal hotdog fold; that stretch reads HPLLGAAVAL…GVLASGAATV (125 aa). The 281-residue stretch at 6561–6841 folds into the PKS/mFAS DH domain; it reads HPLLGAAVAL…LRPVSADTIA (281 aa). The active-site Proton acceptor; for dehydratase activity is the His6593. The segment at 6700-6841 is C-terminal hotdog fold; it reads ATAVDIDGLY…LRPVSADTIA (142 aa). Asp6761 serves as the catalytic Proton donor; for dehydratase activity. The 76-residue stretch at 7325–7400 folds into the Carrier 5 domain; it reads QELLDFVCEH…LLAGHIGEQL (76 aa). Ser7360 carries the O-(pantetheine 4'-phosphoryl)serine modification.

In terms of assembly, homodimer. The loading module (LM, residues 13-926) dimerizes. LM cross-links to its cognate acyl-carrier domain in a manner that seems physiological; mutation of residues in the 2 domains alters reactions efficiency in a manner predicted by the cross-linked crystal. Pantetheine 4'-phosphate is required as a cofactor.

It participates in antibiotic biosynthesis. Its function is as follows. First protein in the synthesis of the 16-membered macrolide antibiotics FD-891 and FD-892. Composed of 5 modules; the first is a loading module (LM) that synthesizes a starter unit used by the first elongation module for polyketide chain elongation. The starter unit is extended by multiple rounds of addition of malonyl-CoA or methylmalonyl-CoA, and other modifications to help generate the final products. The loading module (residues 1-927, LM with an inactive acyltransferase domain) preferentially decarboxylates malonyl-GfsA acyl carrier protein of the LM (ACP-LM) over methylmalonyl-GfsA ACP-LM and has no activity on malonyl-CoA or methymalonyl-CoA. LM decarboxylates malonyl-ACP-LM better than the malonyl-ACP-1 module of GfsA (i.e. the next module in the same protein) and has no activity on other malonyl-ACP modules. In Streptomyces halstedii, this protein is Polyketide synthase GfsA.